The following is a 149-amino-acid chain: Glutamyl-tRNA(Gln) amidotransferase subunit C, mitochondrial (149 aa).

Residues 1-25 (MNHLHRLFRITQVDRPVLLAITRRL) constitute a mitochondrion transit peptide.

The protein belongs to the GatC family. Subunit of the heterotrimeric GatCAB amidotransferase (AdT) complex, composed of A, B and C subunits.

The protein resides in the mitochondrion. It carries out the reaction L-glutamyl-tRNA(Gln) + L-glutamine + ATP + H2O = L-glutaminyl-tRNA(Gln) + L-glutamate + ADP + phosphate + H(+). Allows the formation of correctly charged Gln-tRNA(Gln) through the transamidation of misacylated Glu-tRNA(Gln) in the mitochondria. The reaction takes place in the presence of glutamine and ATP through an activated gamma-phospho-Glu-tRNA(Gln). In Branchiostoma floridae (Florida lancelet), this protein is Glutamyl-tRNA(Gln) amidotransferase subunit C, mitochondrial.